The primary structure comprises 209 residues: FAS-associated death domain protein (209 aa).

Positions 3-81 constitute a DED domain; it reads PFLVLLHSVS…RKDLLLRLDD (79 aa). A Death domain is found at 97 to 181; that stretch reads LRAAMEIICD…VVADLIEEDQ (85 aa). The segment covering 187-200 has biased composition (polar residues); that stretch reads QSGSANPGSFTAWD. The disordered stretch occupies residues 187–209; that stretch reads QSGSANPGSFTAWDSGSAAPGAS.

As to quaternary structure, can self-associate. Component of the AIM2 PANoptosome complex, a multiprotein complex that drives inflammatory cell death (PANoptosis). Component of the death-induced signaling complex (DISC) composed of cell surface receptor FAS/CD95 or TNFRSF1A, adapter protein FADD and the CASP8 protease; recruitment of CASP8 to the complex is required for processing of CASP8 into the p18 and p10 subunits. Interacts (via death domain) with FAS (via death domain). Interacts directly (via DED domain) with NOL3 (via CARD domain); inhibits death-inducing signaling complex (DISC) assembly by inhibiting the increase in FAS-FADD binding induced by FAS activation. Interacts with CFLAR, PEA15 and MBD4. When phosphorylated, part of a complex containing HIPK3 and FAS. May interact with MAVS/IPS1. Interacts with MOCV v-CFLAR protein and PIDD1. Interacts with RIPK1 and TRADD. Interacts with stimulated TNFRSF10B. Interacts with DDX24. Post-translationally, phosphorylated.

It localises to the cytoplasm. In terms of biological role, apoptotic adapter molecule that recruits caspases CASP8 or CASP10 to the activated FAS/CD95 or TNFRSF1A/TNFR-1 receptors. The resulting aggregate called the death-inducing signaling complex (DISC) performs CASP8 proteolytic activation. Active CASP8 initiates the subsequent cascade of caspases mediating apoptosis. Involved in interferon-mediated antiviral immune response, playing a role in the positive regulation of interferon signaling. The chain is FAS-associated death domain protein from Bos taurus (Bovine).